The following is an 880-amino-acid chain: Valine--tRNA ligase (880 aa).

Positions 48–58 (PNITGKLHLGH) match the 'HIGH' region motif. Positions 527 to 531 (KMSKS) match the 'KMSKS' region motif. ATP is bound at residue Lys-530. Coiled-coil stretches lie at residues 717-741 (KEEL…AIRN) and 810-880 (LFDL…KSLK).

The protein belongs to the class-I aminoacyl-tRNA synthetase family. ValS type 1 subfamily. As to quaternary structure, monomer.

Its subcellular location is the cytoplasm. It carries out the reaction tRNA(Val) + L-valine + ATP = L-valyl-tRNA(Val) + AMP + diphosphate. Functionally, catalyzes the attachment of valine to tRNA(Val). As ValRS can inadvertently accommodate and process structurally similar amino acids such as threonine, to avoid such errors, it has a 'posttransfer' editing activity that hydrolyzes mischarged Thr-tRNA(Val) in a tRNA-dependent manner. This Clostridium tetani (strain Massachusetts / E88) protein is Valine--tRNA ligase.